The following is a 503-amino-acid chain: Glucosaminyl-phosphatidylinositol-acyltransferase PIGW (503 aa).

The Lumenal segment spans residues 1–21 (MSQKQLKEAFVRNLSGTSVLE). A glycan (N-linked (GlcNAc...) asparagine) is linked at asparagine 13. A helical transmembrane segment spans residues 22–42 (VTQGLCFPAFCILCRGLWIIF). The Cytoplasmic portion of the chain corresponds to 43–48 (SQHVCS). The chain crosses the membrane as a helical span at residues 49–71 (FSNTWSTRFLMDFVVLIVPLVIT). Residues 72 to 74 (LTV) are Lumenal-facing. Residues 75-97 (LSSFILLENLTVIVWGAWLLYQI) form a helical membrane-spanning segment. Residues 98-131 (YHRRTCYAKVPVQKVFANFLKISLESEYNPAITC) lie on the Cytoplasmic side of the membrane. A helical transmembrane segment spans residues 132-152 (YRVINSVFTAIAILAVDFPLF). The Lumenal segment spans residues 153–160 (PRRFAKTE). A helical membrane pass occupies residues 161 to 181 (LYGTGAMDFGVGGFIFGAAMV). The Cytoplasmic portion of the chain corresponds to 182 to 201 (CPEVRRKSIEESRFNYLRKS). Residues 202 to 222 (LYSVWPLVFLGMGRLVIIKSI) form a helical membrane-spanning segment. At 223–236 (GYQEHSTEYGIHWN) the chain is on the lumenal side. The helical transmembrane segment at 237-257 (FFFTIIVVRLVTSLLLIIFPL) threads the bilayer. Residues 258-259 (NK) are Cytoplasmic-facing. The chain crosses the membrane as a helical span at residues 260-280 (SWIVAVSITVVYQLALDYTPL). Topologically, residues 281-304 (KRILLYGTDGSGTRVGFLNANREG) are lumenal. Residues 305 to 325 (IISTLGYVTIHMAGVQTGLYV) traverse the membrane as a helical segment. Topologically, residues 326 to 339 (LKGRAQVRDWIKAT) are cytoplasmic. The helical transmembrane segment at 340–360 (CWVFSVAVGFFISLHIVQVNI) threads the bilayer. The Lumenal segment spans residues 361–380 (EAVSRRMANLAFCLWVVASS). Residues 381 to 401 (LMLLSCLLLSGIILSFAQFLI) traverse the membrane as a helical segment. Residues 402–447 (KGSLVPCSWKLIQSPTTHKNHSESLILEAEKNQPSLCLITALNRNQ) lie on the Cytoplasmic side of the membrane. Serine 415 bears the Phosphoserine mark. The helical transmembrane segment at 448 to 468 (LFFFLLSNITTGLINLTMDTL) threads the bilayer. Residues 469-472 (HTGA) are Lumenal-facing. A helical membrane pass occupies residues 473–493 (LWTLVVLSIYMFTNCLVIYVL). The Cytoplasmic portion of the chain corresponds to 494-503 (DLQGKTIKFW).

This sequence belongs to the PIGW family.

The protein resides in the endoplasmic reticulum membrane. It participates in glycolipid biosynthesis; glycosylphosphatidylinositol-anchor biosynthesis. Its function is as follows. Acyltransferase that catalyzes the acyl transfer from an acyl-CoA at the 2-OH position of the inositol ring of glucosaminyl phosphatidylinositol (GlcN-PI) to generate GlcN-(acyl)PI and participates in the fourth step of GPI-anchor biosynthesi. Required for the transport of GPI-anchored proteins to the plasma membrane. Acetylation during GPI-anchor biosynthesis is not essential for the subsequent mannosylation and is usually removed soon after the attachment of GPIs to proteins. In Mus musculus (Mouse), this protein is Glucosaminyl-phosphatidylinositol-acyltransferase PIGW.